Here is a 148-residue protein sequence, read N- to C-terminus: Large ribosomal subunit protein bL9 (148 aa).

Belongs to the bacterial ribosomal protein bL9 family.

In terms of biological role, binds to the 23S rRNA. This Clostridium beijerinckii (strain ATCC 51743 / NCIMB 8052) (Clostridium acetobutylicum) protein is Large ribosomal subunit protein bL9.